A 570-amino-acid chain; its full sequence is MANPKEKTPVCLVNELARFHSIQPQYKLLNESGPAHSKMFSVQLSLGEQTWESEGSSIKKAQQAVANKALTESTLPKPVQKPPKSNVNNNPGSITPTVELNGLAMKRGEPAIYRPLDPKPFPNYRANYNFRGMYNQRYHCPMPKIFYVQLTVGNNEFFGEGKTRQAARHNAAMKALQALQNEPIPEKSPQNGESGKEMDDDKDANKSEISLVFEIALKRNMPVSFEVIKESGPPHMKSFVTRVSVGEFSAEGEGNSKKLSKKRAATTVLQELKKLPPLPVVEKPKLFFKKRPKTIVKAGPDYGQGMNPISRLAQIQQARKEKEPDYILLSERGMPRRREFVMQVKVGNEVATGTGPNKKIAKKNAAEAMLLQLGYKASTSLQDPLDKTGENKGWSGPKPGFPEPTNNTPKGILHLSPDVYQEMEASRHRVTSGTTLSYLSPKDMNQPSSSFFSVSPSSTSSATVARELLMNGTSPTAEAIGLKGSSPTSPCSSVQPSKQLEYLARIQGFQAALSALKQFSEQGLESIDGAVNVEKGSLEKQAKHLREKADNNQAKPASISQDCKKSKSAI.

The DRBM 1 domain maps to 8–75 (TPVCLVNELA…ANKALTESTL (68 aa)). Disordered regions lie at residues 71 to 94 (TEST…PGSI) and 178 to 203 (ALQN…DDKD). Residues 83–94 (PKSNVNNNPGSI) show a composition bias toward polar residues. The 87-residue stretch at 95-181 (TPTVELNGLA…AMKALQALQN (87 aa)) folds into the DRBM 2 domain. Ser-188 is modified (phosphoserine). Basic and acidic residues predominate over residues 194–203 (SGKEMDDDKD). 2 DRBM domains span residues 207-274 (SEIS…ELKK) and 307-375 (NPIS…QLGY). Short sequence motifs (nuclear localization signal) lie at residues 273-291 (KKLP…FKKR) and 373-412 (LGYK…PKGI). The disordered stretch occupies residues 381–413 (LQDPLDKTGENKGWSGPKPGFPEPTNNTPKGIL). The segment at 381–570 (LQDPLDKTGE…QDCKKSKSAI (190 aa)) is required for dendritic transport. Ser-395 is subject to Phosphoserine. Thr-405 is subject to Phosphothreonine. 5 positions are modified to phosphoserine: Ser-416, Ser-426, Ser-440, Ser-455, and Ser-492. The segment at 545–570 (LREKADNNQAKPASISQDCKKSKSAI) is disordered. Over residues 551–561 (NNQAKPASISQ) the composition is skewed to polar residues.

Interacts with microtubules. Isoform 2 and isoform 3 may also interact with ribosomes, and this association is independent of translation. Identified in a mRNP complex, at least composed of DHX9, DDX3X, ELAVL1, HNRNPU, IGF2BP1, ILF3, PABPC1, PCBP2, PTBP2, STAU1, STAU2, SYNCRIP and YBX1. Interacts with the exportin XPO5. This requires RNA and RAN bound to GTP. Interacts with TRIM71 (via NHL repeats) in an RNA-dependent manner. Expressed in brain and neurons, where isoform 2 and isoform 3 appear to be the most abundant. Expressed at the neuromuscular junction of the extensor digitorum longus, tibialis anterior and soleus muscles. Expression at neuromuscular junctions is most pronounced in slow-twitch muscle. Also weakly expressed in heart, kidney, ovary and testis.

It is found in the cytoplasm. The protein resides in the nucleus. It localises to the nucleolus. The protein localises to the endoplasmic reticulum. In terms of biological role, RNA-binding protein required for the microtubule-dependent transport of neuronal RNA from the cell body to the dendrite. As protein synthesis occurs within the dendrite, the localization of specific mRNAs to dendrites may be a prerequisite for neurite outgrowth and plasticity at sites distant from the cell body. This chain is Double-stranded RNA-binding protein Staufen homolog 2 (Stau2), found in Mus musculus (Mouse).